Here is a 538-residue protein sequence, read N- to C-terminus: MSTYPINAPGQSADAAVLIVGGGPTGLIAANELLRRGVSCRMIDRLPVAHQTSKSCTIHARSMEMMEHIGIAARYIETGVRSNGFTFNFENTDANALLDFSVLPGRYPFITIYNQNETERVLRHDLEATYSFQPEWGTQLLALNQDENGIRADLRLKDGTKQTISPRWVIGADGVRSRVRECLGIAYEGEDYEENVLQMMDVGIQDFEAGDDWIHYFIGQDKFVFVTKLPGSNYRVIISDLGGANKSNLEETREAFQGYLSSFDDHATLDEPRWATKWRVWKRMATAYRKGNVFLAGDAAHCHSPSGGSGMNVGMQDAFNLGWKIAMVERGEAKPDLLDTYHTERTPVAQQLLEGTHAMHEIIMGHGKGLTDRIELTQAPGWHDAATYRVSGMSYNYRDQLVSFNDDRLAGPSAGDRIPDAELAPRIRLFDLVRNTRPTLLVAPATEAEVAEAEKLRDLIREQWPLVKPVLVRPQGSEESIEGDVHVDSYGQLKREWGDNAKGWAALLRPDNYIHARAGLDRGDLLVQAIDAMLVRCA.

FAD-binding positions include 16–45 and 288–298; these read AVLI…MIDR and YRKGNVFLAGD.

The protein belongs to the PheA/TfdB FAD monooxygenase family. Homodimer. The cofactor is FAD.

The enzyme catalyses pentachlorophenol + NADPH + O2 + H(+) = 2,3,5,6-tetrachloro-1,4-benzoquinone + chloride + NADP(+) + H2O. It carries out the reaction 2,3,5,6-tetrachlorophenol + NADPH + O2 = 2,3,5,6-tetrachlorohydroquinone + NADP(+) + H2O. The protein operates within xenobiotic degradation; pentachlorophenol degradation. Dechlorination of pentachlorophenol to tetrachlorobenzoquinone. Also removes hydrogen and nitro, amino, and cyano groups from benzene ring at the para position in relation to the hydroxyl of phenol. The chain is Pentachlorophenol 4-monooxygenase (pcpB) from Sphingobium chlorophenolicum.